Consider the following 442-residue polypeptide: Histidinol dehydrogenase (442 aa).

Residues Y136, Q197, and N220 each contribute to the NAD(+) site. The substrate site is built by S243, Q265, and H268. Zn(2+)-binding residues include Q265 and H268. Active-site proton acceptor residues include E333 and H334. The substrate site is built by H334, D367, E421, and H426. Residue D367 participates in Zn(2+) binding. H426 contributes to the Zn(2+) binding site.

This sequence belongs to the histidinol dehydrogenase family. Zn(2+) is required as a cofactor.

It carries out the reaction L-histidinol + 2 NAD(+) + H2O = L-histidine + 2 NADH + 3 H(+). It functions in the pathway amino-acid biosynthesis; L-histidine biosynthesis; L-histidine from 5-phospho-alpha-D-ribose 1-diphosphate: step 9/9. Catalyzes the sequential NAD-dependent oxidations of L-histidinol to L-histidinaldehyde and then to L-histidine. The protein is Histidinol dehydrogenase of Pseudomonas fluorescens (strain ATCC BAA-477 / NRRL B-23932 / Pf-5).